The primary structure comprises 66 residues: DNA gyrase inhibitor YacG (66 aa).

Zn(2+) is bound by residues Cys-9, Cys-12, Cys-28, and Cys-32.

This sequence belongs to the DNA gyrase inhibitor YacG family. Interacts with GyrB. Zn(2+) is required as a cofactor.

Its function is as follows. Inhibits all the catalytic activities of DNA gyrase by preventing its interaction with DNA. Acts by binding directly to the C-terminal domain of GyrB, which probably disrupts DNA binding by the gyrase. This Pseudomonas fluorescens (strain Pf0-1) protein is DNA gyrase inhibitor YacG.